Reading from the N-terminus, the 385-residue chain is Methionyl-tRNA formyltransferase, mitochondrial (385 aa).

It belongs to the Fmt family.

Its subcellular location is the mitochondrion. It carries out the reaction L-methionyl-tRNA(fMet) + (6R)-10-formyltetrahydrofolate = N-formyl-L-methionyl-tRNA(fMet) + (6S)-5,6,7,8-tetrahydrofolate + H(+). Methionyl-tRNA formyltransferase that formylates methionyl-tRNA in mitochondria and is crucial for translation initiation. The protein is Methionyl-tRNA formyltransferase, mitochondrial (Mtfmt) of Rattus norvegicus (Rat).